Consider the following 129-residue polypeptide: Small ribosomal subunit protein uS11 (129 aa).

The protein belongs to the universal ribosomal protein uS11 family. Part of the 30S ribosomal subunit. Interacts with proteins S7 and S18. Binds to IF-3.

In terms of biological role, located on the platform of the 30S subunit, it bridges several disparate RNA helices of the 16S rRNA. Forms part of the Shine-Dalgarno cleft in the 70S ribosome. This chain is Small ribosomal subunit protein uS11, found in Dechloromonas aromatica (strain RCB).